A 527-amino-acid polypeptide reads, in one-letter code: Mitochondrial substrate carrier family protein V (527 aa).

The span at 1–14 (MNSSDFKKSFKEST) shows a compositional bias: basic and acidic residues. The tract at residues 1-29 (MNSSDFKKSFKESTENNSNTYRPSKTLNT) is disordered. Topologically, residues 1 to 132 (MNSSDFKKSF…VSKKSISKEN (132 aa)) are mitochondrial intermembrane. The span at 15 to 29 (ENNSNTYRPSKTLNT) shows a compositional bias: polar residues. Solcar repeat units follow at residues 130-220 (KENV…CKKH), 253-345 (MTVP…FKII), and 430-519 (VNMI…CKDL). The chain crosses the membrane as a helical span at residues 133-153 (VNYLVSGSIAGAISRSATAGF). The Mitochondrial matrix segment spans residues 154–187 (ERLTIIQQVQGMSQNLSQGYVGCIAAMKEMVKRE). A helical membrane pass occupies residues 188–208 (GFKSIWKGNGANIVKVSPNSG). Topologically, residues 209-258 (IRFLTYEFCKKHFLDNSSNHPSSSSIENGIDGNGVGCGSGSEMKMTVPQT) are mitochondrial intermembrane. The helical transmembrane segment at 259–279 (MFSGAMAGLTSTFFTYPLDVV) threads the bilayer. Residues 280–324 (RIRLSLQGSCSNDYAAHRYNGITHSFFKIHKDEGVKGLYKGLGTS) lie on the Mitochondrial matrix side of the membrane. The helical transmembrane segment at 325–345 (IASIVPWVSISFATYEGFKII) threads the bilayer. At 346-435 (CKKMILNYQI…LKKGVNMICD (90 aa)) the chain is on the mitochondrial intermembrane side. The helical transmembrane segment at 436–456 (FVCGALSGAVTMTVCYPLDVL) threads the bilayer. The Mitochondrial matrix segment spans residues 457-487 (RRRMMIQGIGGNKVLYKNGWDATKKILSNEG). A helical membrane pass occupies residues 488–508 (LVAFYHGIIPAYFKVVPTVAI). Residues 509-527 (SFAVYEICKDLGSNKYQQK) lie on the Mitochondrial intermembrane side of the membrane.

Belongs to the mitochondrial carrier (TC 2.A.29) family.

It localises to the mitochondrion inner membrane. Its function is as follows. Mitochondrial solute carriers shuttle metabolites, nucleotides, and cofactors through the mitochondrial inner membrane. This is Mitochondrial substrate carrier family protein V (mcfV) from Dictyostelium discoideum (Social amoeba).